The following is a 425-amino-acid chain: uncharacterized protein (425 aa).

Residues 1 to 57 enclose the TRAM domain; sequence MKDKPLKLTVEKLVYGGYGFSRLNGKAVFVRFASPKELVEAKVVKEKKDYTEAVVTK. C70, C76, C79, and C153 together coordinate [4Fe-4S] cluster. Q260, D308, and D354 together coordinate S-adenosyl-L-methionine. C381 (nucleophile) is an active-site residue.

Belongs to the class I-like SAM-binding methyltransferase superfamily. RNA M5U methyltransferase family.

This is an uncharacterized protein from Aquifex aeolicus (strain VF5).